A 131-amino-acid chain; its full sequence is Small ribosomal subunit protein uS8 (131 aa).

The protein belongs to the universal ribosomal protein uS8 family. As to quaternary structure, part of the 30S ribosomal subunit. Contacts proteins S5 and S12.

One of the primary rRNA binding proteins, it binds directly to 16S rRNA central domain where it helps coordinate assembly of the platform of the 30S subunit. The chain is Small ribosomal subunit protein uS8 from Hamiltonella defensa subsp. Acyrthosiphon pisum (strain 5AT).